We begin with the raw amino-acid sequence, 29 residues long: Cytochrome b6-f complex subunit 8 (29 aa).

A helical transmembrane segment spans residues 3-23 (IITFGWVAVAAFFALSIAFVV).

The protein belongs to the PetN family. As to quaternary structure, the 4 large subunits of the cytochrome b6-f complex are cytochrome b6, subunit IV (17 kDa polypeptide, PetD), cytochrome f and the Rieske protein, while the 4 small subunits are PetG, PetL, PetM and PetN. The complex functions as a dimer.

The protein resides in the cellular thylakoid membrane. Its function is as follows. Component of the cytochrome b6-f complex, which mediates electron transfer between photosystem II (PSII) and photosystem I (PSI), cyclic electron flow around PSI, and state transitions. This chain is Cytochrome b6-f complex subunit 8, found in Synechococcus sp. (strain JA-3-3Ab) (Cyanobacteria bacterium Yellowstone A-Prime).